Reading from the N-terminus, the 530-residue chain is ATP synthase subunit alpha 3 (530 aa).

An ATP-binding site is contributed by 174–181 (GDRATGKT). Residues 507–522 (TASATAPPDPPAASAA) are compositionally biased toward low complexity. Residues 507 to 530 (TASATAPPDPPAASAAELPQPDSP) are disordered.

It belongs to the ATPase alpha/beta chains family. As to quaternary structure, F-type ATPases have 2 components, CF(1) - the catalytic core - and CF(0) - the membrane proton channel. CF(1) has five subunits: alpha(3), beta(3), gamma(1), delta(1), epsilon(1). CF(0) has three main subunits: a(1), b(2) and c(9-12). The alpha and beta chains form an alternating ring which encloses part of the gamma chain. CF(1) is attached to CF(0) by a central stalk formed by the gamma and epsilon chains, while a peripheral stalk is formed by the delta and b chains.

The protein localises to the cell inner membrane. The enzyme catalyses ATP + H2O + 4 H(+)(in) = ADP + phosphate + 5 H(+)(out). Its function is as follows. Produces ATP from ADP in the presence of a proton gradient across the membrane. The alpha chain is a regulatory subunit. The polypeptide is ATP synthase subunit alpha 3 (Paraburkholderia xenovorans (strain LB400)).